The sequence spans 456 residues: Adenylosuccinate synthetase isozyme 1 (456 aa).

A disordered region spans residues 1 to 30; it reads MSSGWSQNDHRSYSNPPPVSGKRPRNDSGN. GTP contacts are provided by residues 41 to 47 and 69 to 71; these read GDEGKGK and GHT. The active-site Proton acceptor is Asp42. Residues Asp42 and Gly69 each contribute to the Mg(2+) site. Position 42 (Asp42) interacts with substrate. IMP-binding positions include 42 to 45 and 67 to 70; these read DEGK and NAGH. His70 acts as the Proton donor in catalysis. Ser130 carries the phosphoserine modification. 5 residues coordinate IMP: Thr162, Arg176, Asn255, Thr270, and Arg334. 330-336 is a binding site for substrate; the sequence is VTTGRKR. Residues Arg336, 362–364, and 444–447 contribute to the GTP site; these read KLD and GVGK.

Belongs to the adenylosuccinate synthetase family. In terms of assembly, homodimer. Mg(2+) serves as cofactor.

The protein localises to the cytoplasm. It carries out the reaction IMP + L-aspartate + GTP = N(6)-(1,2-dicarboxyethyl)-AMP + GDP + phosphate + 2 H(+). The protein operates within purine metabolism; AMP biosynthesis via de novo pathway; AMP from IMP: step 1/2. Its function is as follows. Component of the purine nucleotide cycle (PNC), which interconverts IMP and AMP to regulate the nucleotide levels in various tissues, and which contributes to glycolysis and ammoniagenesis. Catalyzes the first committed step in the biosynthesis of AMP from IMP. The protein is Adenylosuccinate synthetase isozyme 1 (adss1) of Danio rerio (Zebrafish).